The sequence spans 500 residues: 4-alpha-glucanotransferase (500 aa).

Belongs to the disproportionating enzyme family.

The protein localises to the cytoplasm. It carries out the reaction Transfers a segment of a (1-&gt;4)-alpha-D-glucan to a new position in an acceptor, which may be glucose or a (1-&gt;4)-alpha-D-glucan.. The polypeptide is 4-alpha-glucanotransferase (malQ) (Thermus thermophilus).